Consider the following 75-residue polypeptide: UPF0346 protein LEUM_0763 (75 aa).

The protein belongs to the UPF0346 family.

This Leuconostoc mesenteroides subsp. mesenteroides (strain ATCC 8293 / DSM 20343 / BCRC 11652 / CCM 1803 / JCM 6124 / NCDO 523 / NBRC 100496 / NCIMB 8023 / NCTC 12954 / NRRL B-1118 / 37Y) protein is UPF0346 protein LEUM_0763.